A 335-amino-acid chain; its full sequence is NADH-quinone oxidoreductase subunit H (335 aa).

8 helical membrane passes run 12–32 (IIAV…GALL), 81–101 (VIFT…FAVI), 114–134 (IGLL…LFAG), 154–174 (VSYE…VGSF), 187–207 (LWFI…GVAV), 238–258 (FFVG…TLFF), 270–290 (SLAF…FILL), and 307–327 (WKFC…IVLL).

This sequence belongs to the complex I subunit 1 family. In terms of assembly, NDH-1 is composed of 13 different subunits. Subunits NuoA, H, J, K, L, M, N constitute the membrane sector of the complex.

Its subcellular location is the cell inner membrane. The enzyme catalyses a quinone + NADH + 5 H(+)(in) = a quinol + NAD(+) + 4 H(+)(out). Functionally, NDH-1 shuttles electrons from NADH, via FMN and iron-sulfur (Fe-S) centers, to quinones in the respiratory chain. The immediate electron acceptor for the enzyme in this species is believed to be ubiquinone. Couples the redox reaction to proton translocation (for every two electrons transferred, four hydrogen ions are translocated across the cytoplasmic membrane), and thus conserves the redox energy in a proton gradient. This subunit may bind ubiquinone. This is NADH-quinone oxidoreductase subunit H from Pseudomonas syringae pv. tomato (strain ATCC BAA-871 / DC3000).